Here is a 359-residue protein sequence, read N- to C-terminus: Chorismate synthase (359 aa).

Arginine 47 is a binding site for NADP(+). FMN-binding positions include 123 to 125, glycine 283, 298 to 302, and arginine 326; these read RSS and KPTSS.

Belongs to the chorismate synthase family. Homotetramer. The cofactor is FMNH2.

It catalyses the reaction 5-O-(1-carboxyvinyl)-3-phosphoshikimate = chorismate + phosphate. It participates in metabolic intermediate biosynthesis; chorismate biosynthesis; chorismate from D-erythrose 4-phosphate and phosphoenolpyruvate: step 7/7. Functionally, catalyzes the anti-1,4-elimination of the C-3 phosphate and the C-6 proR hydrogen from 5-enolpyruvylshikimate-3-phosphate (EPSP) to yield chorismate, which is the branch point compound that serves as the starting substrate for the three terminal pathways of aromatic amino acid biosynthesis. This reaction introduces a second double bond into the aromatic ring system. The polypeptide is Chorismate synthase (Chlamydia caviae (strain ATCC VR-813 / DSM 19441 / 03DC25 / GPIC) (Chlamydophila caviae)).